A 191-amino-acid chain; its full sequence is Elongation factor P 1 (191 aa).

This sequence belongs to the elongation factor P family.

It localises to the cytoplasm. It participates in protein biosynthesis; polypeptide chain elongation. Involved in peptide bond synthesis. Stimulates efficient translation and peptide-bond synthesis on native or reconstituted 70S ribosomes in vitro. Probably functions indirectly by altering the affinity of the ribosome for aminoacyl-tRNA, thus increasing their reactivity as acceptors for peptidyl transferase. The protein is Elongation factor P 1 of Lactobacillus acidophilus (strain ATCC 700396 / NCK56 / N2 / NCFM).